The chain runs to 428 residues: GTPase Obg (428 aa).

The Obg domain maps to 1–158; sequence MFIDIAKVFI…LSIVLELKLL (158 aa). One can recognise an OBG-type G domain in the interval 159–331; sequence ADVGLLGFPN…VIKEAARMLK (173 aa). Residues 165–172, 190–194, 212–215, 282–285, and 312–314 each bind GTP; these read GFPNVGKS, FTTLK, DIPG, NKSD, and SAA. The Mg(2+) site is built by Ser172 and Thr192. One can recognise an OCT domain in the interval 345–428; that stretch reads MYIPEEKKFT…LNDFEFEYLL (84 aa).

It belongs to the TRAFAC class OBG-HflX-like GTPase superfamily. OBG GTPase family. In terms of assembly, monomer. Requires Mg(2+) as cofactor.

It is found in the cytoplasm. An essential GTPase which binds GTP, GDP and possibly (p)ppGpp with moderate affinity, with high nucleotide exchange rates and a fairly low GTP hydrolysis rate. Plays a role in control of the cell cycle, stress response, ribosome biogenesis and in those bacteria that undergo differentiation, in morphogenesis control. This is GTPase Obg from Clostridium botulinum (strain Alaska E43 / Type E3).